Here is a 172-residue protein sequence, read N- to C-terminus: Adenine phosphoribosyltransferase (172 aa).

It belongs to the purine/pyrimidine phosphoribosyltransferase family. As to quaternary structure, homodimer.

It is found in the cytoplasm. The enzyme catalyses AMP + diphosphate = 5-phospho-alpha-D-ribose 1-diphosphate + adenine. The protein operates within purine metabolism; AMP biosynthesis via salvage pathway; AMP from adenine: step 1/1. Its function is as follows. Catalyzes a salvage reaction resulting in the formation of AMP, that is energically less costly than de novo synthesis. In Staphylococcus carnosus (strain TM300), this protein is Adenine phosphoribosyltransferase.